Here is a 149-residue protein sequence, read N- to C-terminus: 3-hydroxyacyl-[acyl-carrier-protein] dehydratase FabZ (149 aa).

His47 is a catalytic residue.

It belongs to the thioester dehydratase family. FabZ subfamily.

It localises to the cytoplasm. It carries out the reaction a (3R)-hydroxyacyl-[ACP] = a (2E)-enoyl-[ACP] + H2O. Involved in unsaturated fatty acids biosynthesis. Catalyzes the dehydration of short chain beta-hydroxyacyl-ACPs and long chain saturated and unsaturated beta-hydroxyacyl-ACPs. In Thioalkalivibrio sulfidiphilus (strain HL-EbGR7), this protein is 3-hydroxyacyl-[acyl-carrier-protein] dehydratase FabZ.